A 204-amino-acid chain; its full sequence is Salt stress root protein RS1 (204 aa).

The disordered stretch occupies residues 128–204 (FVPKEEPKPE…AAPAAEPEKQ (77 aa)). Residues 147 to 161 (TSREVAVEEEKKEEE) are compositionally biased toward basic and acidic residues. Over residues 164-180 (PAEPAAAAAEAAAPSTE) the composition is skewed to low complexity. A compositionally biased stretch (basic and acidic residues) spans 182–192 (VEEKKEEEKPA). The segment covering 193–204 (EAAAPAAEPEKQ) has biased composition (low complexity).

This sequence belongs to the DREPP family.

The chain is Salt stress root protein RS1 from Oryza sativa subsp. indica (Rice).